Reading from the N-terminus, the 325-residue chain is 2-dehydro-3-deoxygluconokinase (325 aa).

Substrate-binding positions include 49–53 (GSEAN), Y105, 121–123 (YYR), and R181. ATP is bound by residues 179 to 181 (NIR), 240 to 245 (KLGAEG), and 269 to 272 (GAGD). The substrate site is built by D272 and D308. D272 acts as the Proton acceptor in catalysis.

This sequence belongs to the carbohydrate kinase PfkB family. In terms of assembly, homohexamer; trimer of dimers.

The enzyme catalyses 2-dehydro-3-deoxy-D-gluconate + ATP = 2-dehydro-3-deoxy-6-phospho-D-gluconate + ADP + H(+). Its pathway is carbohydrate acid metabolism; 2-dehydro-3-deoxy-D-gluconate degradation; D-glyceraldehyde 3-phosphate and pyruvate from 2-dehydro-3-deoxy-D-gluconate: step 1/2. Involved in the degradation of glucose via the semi-phosphorylative Entner-Doudoroff pathway. Catalyzes the phosphorylation of 2-keto-3-deoxygluconate (KDG) yielding 2-keto-3-deoxy-6-phosphogluconate (KDPG). The sequence is that of 2-dehydro-3-deoxygluconokinase (kdgK) from Thermoproteus tenax.